The primary structure comprises 370 residues: Chaperone protein DnaJ (370 aa).

In terms of domain architecture, J spans 7–73 (DYYEILGVPR…QKRAMYDRFG (67 aa)). The CR-type zinc-finger motif lies at 144 to 226 (GTEIPIEYER…CGGSGRVLRR (83 aa)). Residues Cys-157, Cys-160, Cys-174, Cys-177, Cys-200, Cys-203, Cys-214, and Cys-217 each coordinate Zn(2+). CXXCXGXG motif repeat units lie at residues 157–164 (CPRCGGTG), 174–181 (CPRCGGTG), 200–207 (CDECGGTG), and 214–221 (CHECGGSG).

Belongs to the DnaJ family. As to quaternary structure, homodimer. Zn(2+) serves as cofactor.

It localises to the cytoplasm. Participates actively in the response to hyperosmotic and heat shock by preventing the aggregation of stress-denatured proteins and by disaggregating proteins, also in an autonomous, DnaK-independent fashion. Unfolded proteins bind initially to DnaJ; upon interaction with the DnaJ-bound protein, DnaK hydrolyzes its bound ATP, resulting in the formation of a stable complex. GrpE releases ADP from DnaK; ATP binding to DnaK triggers the release of the substrate protein, thus completing the reaction cycle. Several rounds of ATP-dependent interactions between DnaJ, DnaK and GrpE are required for fully efficient folding. Also involved, together with DnaK and GrpE, in the DNA replication of plasmids through activation of initiation proteins. In Thermotoga neapolitana (strain ATCC 49049 / DSM 4359 / NBRC 107923 / NS-E), this protein is Chaperone protein DnaJ.